The primary structure comprises 109 residues: Nucleoid-associated protein Sputw3181_1707 (109 aa).

Belongs to the YbaB/EbfC family. As to quaternary structure, homodimer.

The protein resides in the cytoplasm. It is found in the nucleoid. Its function is as follows. Binds to DNA and alters its conformation. May be involved in regulation of gene expression, nucleoid organization and DNA protection. The chain is Nucleoid-associated protein Sputw3181_1707 from Shewanella sp. (strain W3-18-1).